A 337-amino-acid chain; its full sequence is tRNA N6-adenosine threonylcarbamoyltransferase (337 aa).

Fe cation is bound by residues histidine 111 and histidine 115. Substrate contacts are provided by residues 134-138, aspartate 167, glycine 180, and asparagine 272; that span reads LVSGG. Aspartate 300 is a binding site for Fe cation.

It belongs to the KAE1 / TsaD family. Requires Fe(2+) as cofactor.

The protein resides in the cytoplasm. The catalysed reaction is L-threonylcarbamoyladenylate + adenosine(37) in tRNA = N(6)-L-threonylcarbamoyladenosine(37) in tRNA + AMP + H(+). Its function is as follows. Required for the formation of a threonylcarbamoyl group on adenosine at position 37 (t(6)A37) in tRNAs that read codons beginning with adenine. Is involved in the transfer of the threonylcarbamoyl moiety of threonylcarbamoyl-AMP (TC-AMP) to the N6 group of A37, together with TsaE and TsaB. TsaD likely plays a direct catalytic role in this reaction. The protein is tRNA N6-adenosine threonylcarbamoyltransferase of Pectobacterium atrosepticum (strain SCRI 1043 / ATCC BAA-672) (Erwinia carotovora subsp. atroseptica).